The following is a 221-amino-acid chain: Germin-like protein 8-2 (221 aa).

The N-terminal stretch at Met-1–Ala-24 is a signal peptide. A disulfide bond links Cys-34 and Cys-49. Residues Asn-54 and Asn-79 are each glycosylated (N-linked (GlcNAc...) asparagine). The region spanning Ala-64 to Asp-215 is the Cupin type-1 domain. Mn(2+) is bound by residues His-112, His-114, Glu-119, and His-160.

Belongs to the germin family. Oligomer (believed to be a pentamer but probably hexamer).

It is found in the secreted. It localises to the extracellular space. The protein resides in the apoplast. Its function is as follows. Plays a role in broad-spectrum disease resistance. Probably has no oxalate oxidase activity even if the active site is conserved. The sequence is that of Germin-like protein 8-2 (GER3) from Oryza sativa subsp. japonica (Rice).